A 915-amino-acid chain; its full sequence is Protein ZDS1 (915 aa).

Disordered regions lie at residues 1 to 28 (MSNRDNESMLRTTSSDKAIASQRDKRKS), 69 to 134 (GESS…KKGV), 179 to 261 (LSDN…SETV), 310 to 330 (GSYSDKKDQPQPEGHYDEGDI), 412 to 433 (KSPFRQQDEDSENMSSPGSIGD), and 464 to 807 (KVRN…SILP). Low complexity predominate over residues 74 to 93 (RRSWSGTTSSSASMPSDTTT). A compositionally biased stretch (polar residues) spans 115-125 (GIESSNKTKQG). The segment covering 202-212 (DKESQSYENKE) has biased composition (basic and acidic residues). Phosphoserine is present on S229. Residues 243 to 252 (EFDDNEDDDN) show a composition bias toward acidic residues. Residues 313–327 (SDKKDQPQPEGHYDE) show a composition bias toward basic and acidic residues. The span at 464–480 (KVRNDTVEQDLELREGT) shows a compositional bias: basic and acidic residues. Over residues 515 to 530 (DDNEENQGDDENEENV) the composition is skewed to acidic residues. Basic and acidic residues-rich tracts occupy residues 531-541 (DSQRMELDNSK) and 552-562 (EKTEVSNKEEM). Low complexity-rich tracts occupy residues 565–574 (SSTSTATSQT) and 597–609 (SSSPSSSPSSSPS). Basic residues-rich tracts occupy residues 618–627 (VRVRKSKKLG) and 642–656 (NRPRPHRHHHSRHGS). Positions 668-679 (QPQQQIPLQPQL) are enriched in low complexity. Over residues 696-710 (LPQLQPAVSVSSTKS) the composition is skewed to polar residues. Composition is skewed to basic and acidic residues over residues 711–721 (NSRDREEEEAK) and 742–751 (VQKENTDEQK). Over residues 752–793 (AQLQAPAQEQVQTSVPVQASAPVQNSAPVQTSAPVEASAQTQ) the composition is skewed to polar residues.

The protein to yeast ZDS2/MCS1. Interacts with BCY1, DBP5, GFD1 and SKG6.

It localises to the cytoplasm. Its function is as follows. Has a role in establishing cell polarity. Together with cAMP-dependent protein kinase regulatory subunit BCY1, provides a negative feedback control on the cell wall integrity-signaling pathway by acting as a negative regulator of MAP kinase SLT2/MPK1. In heat-stressed cells appears to play a role in localizing BCY1 to the cytoplasm. Seems to interact with, and down-regulate, CDC42. Also acts as a suppressor of PKC1. May act as an integration point for distinct signaling pathways helping to maintain a balance among these different pathways. When associated with DBP5, GFD1 and nucleoporins at the cytosolic fibrils of the nuclear pore complex, is required for mRNA export form the nucleus. The chain is Protein ZDS1 (ZDS1) from Saccharomyces cerevisiae (strain ATCC 204508 / S288c) (Baker's yeast).